Here is a 239-residue protein sequence, read N- to C-terminus: Uridylate kinase (239 aa).

Residue Lys-13 to Gly-16 participates in ATP binding. Position 55 (Gly-55) interacts with UMP. 2 residues coordinate ATP: Gly-56 and Arg-60. UMP contacts are provided by residues Asp-75 and Thr-136–Thr-143. Residues Thr-163, Gln-164, Tyr-169, and Asp-172 each contribute to the ATP site.

The protein belongs to the UMP kinase family. Homohexamer.

The protein localises to the cytoplasm. The catalysed reaction is UMP + ATP = UDP + ADP. It participates in pyrimidine metabolism; CTP biosynthesis via de novo pathway; UDP from UMP (UMPK route): step 1/1. With respect to regulation, inhibited by UTP. Functionally, catalyzes the reversible phosphorylation of UMP to UDP. This Bartonella henselae (strain ATCC 49882 / DSM 28221 / CCUG 30454 / Houston 1) (Rochalimaea henselae) protein is Uridylate kinase.